The primary structure comprises 182 residues: Isopentenyl-diphosphate Delta-isomerase (182 aa).

Positions 25 and 32 each coordinate Mn(2+). The 135-residue stretch at 30 to 164 (PLHLAFSCWL…PWAFSPWMVM (135 aa)) folds into the Nudix hydrolase domain. Cys-67 is a catalytic residue. His-69 provides a ligand contact to Mn(2+). Residue Glu-87 participates in Mg(2+) binding. Glu-114 and Glu-116 together coordinate Mn(2+). Residue Glu-116 is part of the active site.

It belongs to the IPP isomerase type 1 family. In terms of assembly, homodimer. It depends on Mg(2+) as a cofactor. Mn(2+) is required as a cofactor.

It localises to the cytoplasm. It catalyses the reaction isopentenyl diphosphate = dimethylallyl diphosphate. Its pathway is isoprenoid biosynthesis; dimethylallyl diphosphate biosynthesis; dimethylallyl diphosphate from isopentenyl diphosphate: step 1/1. Functionally, catalyzes the 1,3-allylic rearrangement of the homoallylic substrate isopentenyl (IPP) to its highly electrophilic allylic isomer, dimethylallyl diphosphate (DMAPP). The chain is Isopentenyl-diphosphate Delta-isomerase from Salmonella arizonae (strain ATCC BAA-731 / CDC346-86 / RSK2980).